Reading from the N-terminus, the 1067-residue chain is Hemoglobin and hemoglobin-haptoglobin-binding protein B (1067 aa).

The first 24 residues, 1 to 24, serve as a signal peptide directing secretion; sequence MTNFKFSLLACSIAFALNASTAYA. Tandem repeats lie at residues 26 to 29, 30 to 33, 34 to 37, 38 to 41, 42 to 45, and 46 to 49. Residues 26–49 form a 6 X 4 AA tandem repeats of Q-P-T-N region; that stretch reads QPTNQPTNQPTNQPTNQPTNQPTN. Residues 26 to 51 are compositionally biased toward low complexity; that stretch reads QPTNQPTNQPTNQPTNQPTNQPTNQN. Positions 26–53 are disordered; the sequence is QPTNQPTNQPTNQPTNQPTNQPTNQNSN. The TonB box motif lies at 59–66; that stretch reads EQINVSGS. A TBDR plug domain is found at 71–196; that stretch reads NIKEKKVGET…LGGSVIFETK (126 aa). A TBDR beta-barrel domain is found at 204–1067; the sequence is DKDYYLSYKR…NYRMSVQFEF (864 aa). The short motif at 1050–1067 is the TonB C-terminal box element; sequence NRFYAPGRNYRMSVQFEF.

The protein belongs to the TonB-dependent receptor family. Hemoglobin/haptoglobin binding protein subfamily.

The protein localises to the cell outer membrane. In terms of biological role, acts as a receptor for hemoglobin or the hemoglobin/haptoglobin complex of the human host and is required for heme uptake. This is Hemoglobin and hemoglobin-haptoglobin-binding protein B (hgbB) from Haemophilus influenzae.